The following is a 175-amino-acid chain: Type-2 ice-structuring protein (175 aa).

The signal sequence occupies residues 1-16; sequence MLAALLVCAMVALTRA. A propeptide spanning residues 17 to 33 is cleaved from the precursor; sequence ANGDTGKEAVMTGSSGK. Positions 36-163 constitute a C-type lectin domain; it reads TECPTDWKMF…LHASVCAKPA (128 aa). 5 cysteine pairs are disulfide-bonded: cysteine 38/cysteine 49, cysteine 66/cysteine 159, cysteine 103/cysteine 134, cysteine 123/cysteine 145, and cysteine 135/cysteine 151.

It localises to the secreted. In terms of biological role, antifreeze proteins lower the blood freezing point. This chain is Type-2 ice-structuring protein, found in Osmerus mordax (Rainbow smelt).